A 513-amino-acid polypeptide reads, in one-letter code: ATP synthase subunit alpha (513 aa).

Residue 169–176 participates in ATP binding; sequence GDRQVGKT.

The protein belongs to the ATPase alpha/beta chains family. F-type ATPases have 2 components, CF(1) - the catalytic core - and CF(0) - the membrane proton channel. CF(1) has five subunits: alpha(3), beta(3), gamma(1), delta(1), epsilon(1). CF(0) has three main subunits: a(1), b(2) and c(9-12). The alpha and beta chains form an alternating ring which encloses part of the gamma chain. CF(1) is attached to CF(0) by a central stalk formed by the gamma and epsilon chains, while a peripheral stalk is formed by the delta and b chains.

It is found in the cell inner membrane. The enzyme catalyses ATP + H2O + 4 H(+)(in) = ADP + phosphate + 5 H(+)(out). In terms of biological role, produces ATP from ADP in the presence of a proton gradient across the membrane. The alpha chain is a regulatory subunit. This is ATP synthase subunit alpha from Aeromonas hydrophila subsp. hydrophila (strain ATCC 7966 / DSM 30187 / BCRC 13018 / CCUG 14551 / JCM 1027 / KCTC 2358 / NCIMB 9240 / NCTC 8049).